We begin with the raw amino-acid sequence, 652 residues long: Chaperone protein HtpG (652 aa).

The segment at 1-351 is a; substrate-binding; it reads MTEHVEQLEF…AQDLSLNVSR (351 aa). Residues 352–568 are b; sequence EILQQDRQIQ…VFDFTPMLER (217 aa). Residues 569–652 are c; that stretch reads MYRASGQPVP…ILTDRLTRTL (84 aa).

This sequence belongs to the heat shock protein 90 family. As to quaternary structure, homodimer.

It localises to the cytoplasm. In terms of biological role, molecular chaperone. Has ATPase activity. The chain is Chaperone protein HtpG from Nocardia farcinica (strain IFM 10152).